The chain runs to 350 residues: Protein XRP2 (350 aa).

Residues 1-10 show a composition bias toward basic residues; that stretch reads MGCFFSKRRK. The disordered stretch occupies residues 1–31; that stretch reads MGCFFSKRRKADKESRPENEEERPKQYSWDQ. Glycine 2 carries N-myristoyl glycine lipidation. A lipid anchor (S-palmitoyl cysteine) is attached at cysteine 3. The span at 11 to 31 shows a compositional bias: basic and acidic residues; sequence ADKESRPENEEERPKQYSWDQ. Residues 24 to 179 form the C-CAP/cofactor C-like domain; that stretch reads PKQYSWDQRE…TWSNIHDFTP (156 aa). GTP-binding positions include 98 to 99 and 115 to 118; these read GS and QQFR.

It belongs to the TBCC family. In terms of assembly, found in a complex with ARL3, RP2 and UNC119 (or UNC119B); RP2 induces hydrolysis of GTP ARL3 in the complex, leading to the release of UNC119 (or UNC119B). Interacts with ARL3; interaction is direct and stimulated with the activated GTP-bound form of ARL3. In terms of processing, myristoylated on Gly-2; which may be required for membrane targeting. Palmitoylated on Cys-3; which may be required for plasma membrane targeting. Mutation of Cys-3 targets the protein to internal membranes. Ubiquitous. Expressed in the rod and cone photoreceptors, extending from the tips of the outer segment (OS) through the inner segment (IS) and outer nuclear layer (ONL) and into the synaptic terminals of the outer plexiform layer (ONL). Also detected in the bipolar, horizontal and amacrine cells in the inner nuclear layer (INL), extending to the inner plexiform layer (IPL) and though the ganglion cell layer (GCL) and into the nerve fiber layer (NFL) (at protein level).

The protein localises to the cell membrane. It localises to the cell projection. Its subcellular location is the cilium. Functionally, acts as a GTPase-activating protein (GAP) involved in trafficking between the Golgi and the ciliary membrane. Involved in localization of proteins, such as NPHP3, to the cilium membrane by inducing hydrolysis of GTP ARL3, leading to the release of UNC119 (or UNC119B). Acts as a GTPase-activating protein (GAP) for tubulin in concert with tubulin-specific chaperone C, but does not enhance tubulin heterodimerization. Acts as a guanine nucleotide dissociation inhibitor towards ADP-ribosylation factor-like proteins. This Homo sapiens (Human) protein is Protein XRP2 (RP2).